The following is a 525-amino-acid chain: MSPKELAEAVNKRRTFAIISHPDAGKTTITEQLLLFGGVVREAGTVKARKTGNFAKSDWMEIEKKRGISVTSSVMQFDFQGKRINILDTPGHEDFSEDTYRTLMAVDSAVMVIDSAKGIEPQTKKLFQICKMRGIPIFTFMNKFDRDAREPLDLLNEVEDVLGIETYPINWPIGSGHQFKGIYDRFNHRVALTHPADENNPYLPLDEDGNVEGDNPLAGDGEWQDAMDGMELVEVAGNELDQEKIAKGDQTPVFFGSALTNFGVQTFLETYLQFAPAPSDHKTEDGDVVKPLDPEFSGFVFKIQANMNPRHRDRIAFVRICSGEFDRGMDVTLSRTKKPMRLSNVTEFMADTRENVETAVAGDIIGLYDTGNFQIGDSIYNGKKDIQFEKLPQFTPELFVRVSAKNVMKQKSFHKGINQLVQEGAVQLYRSYSTGDYILGAVGQLQFEVFKFRMQNEYNSEVVMEPMGTKTARWIDPDQLDEKMSSSRNILVKDIHDQPLFLFENQFAENWFKQKYPDVKLTAKL.

The region spanning 11-279 is the tr-type G domain; sequence NKRRTFAIIS…TYLQFAPAPS (269 aa). GTP is bound by residues 20 to 27, 88 to 92, and 142 to 145; these read SHPDAGKT, DTPGH, and NKFD.

Belongs to the TRAFAC class translation factor GTPase superfamily. Classic translation factor GTPase family. PrfC subfamily.

It localises to the cytoplasm. Increases the formation of ribosomal termination complexes and stimulates activities of RF-1 and RF-2. It binds guanine nucleotides and has strong preference for UGA stop codons. It may interact directly with the ribosome. The stimulation of RF-1 and RF-2 is significantly reduced by GTP and GDP, but not by GMP. The protein is Peptide chain release factor 3 of Limosilactobacillus reuteri (strain DSM 20016) (Lactobacillus reuteri).